An 814-amino-acid chain; its full sequence is Oxysterol-binding protein-related protein 1C (814 aa).

A PH domain is found at 103–235 (GNGIAGILYK…WVEALQAVKD (133 aa)). Positions 300–367 (LLIDTLRQLE…AEEEFDEEEN (68 aa)) form a coiled coil. Disordered stretches follow at residues 319 to 366 (VVDE…DEEE) and 379 to 411 (SSFKSSGSGFRTSSFSSDEDGFESEDDIDPSIK). Positions 347–366 (ESDDDNERGDAAEEEFDEEE) are enriched in acidic residues. The span at 379-394 (SSFKSSGSGFRTSSFS) shows a compositional bias: low complexity. Residues 395–407 (SDEDGFESEDDID) show a composition bias toward acidic residues.

Belongs to the OSBP family. As to expression, expressed in roots, leaves, stems, flowers and pollen.

May be involved in the transport of sterols. The sequence is that of Oxysterol-binding protein-related protein 1C (ORP1C) from Arabidopsis thaliana (Mouse-ear cress).